Here is a 429-residue protein sequence, read N- to C-terminus: D-amino acid dehydrogenase (429 aa).

3 to 17 (VLILGSGVIGVTSAW) is a binding site for FAD.

This sequence belongs to the DadA oxidoreductase family. FAD is required as a cofactor.

The catalysed reaction is a D-alpha-amino acid + A + H2O = a 2-oxocarboxylate + AH2 + NH4(+). In terms of biological role, oxidative deamination of D-amino acids. The sequence is that of D-amino acid dehydrogenase from Xanthomonas axonopodis pv. citri (strain 306).